A 685-amino-acid chain; its full sequence is Kinesin-related protein 11 (685 aa).

Positions 4-405 (NISVSVRARP…LKFASRAKKI (402 aa)) constitute a Kinesin motor domain. A disordered region spans residues 36–105 (TSLPPPITQP…TTVPASPAPT (70 aa)). Residues 47–105 (SSLPPISTPIKSSSSSSTSTSAGSLKTPLKTPLKTPLKTPLKTNSTTTNTTVPASPAPT) show a composition bias toward low complexity. 156–163 (GITSSGKT) contributes to the ATP binding site. A coiled-coil region spans residues 411-488 (VNEILDDKAL…KINNLNKLIL (78 aa)). A disordered region spans residues 495–568 (NSASKGGSGS…QSTSSLTIGG (74 aa)). The span at 511 to 520 (RSTFVSPSQN) shows a compositional bias: polar residues. Over residues 533-565 (PNSFSNLLLQSPSQNNNNNSHISPLSQSTSSLT) the composition is skewed to low complexity. A coiled-coil region spans residues 574-683 (FESNELIQIQ…LKSKIQEYEV (110 aa)).

Belongs to the TRAFAC class myosin-kinesin ATPase superfamily. Kinesin family.

It is found in the cytoplasm. Its subcellular location is the cytoskeleton. Microtubule-associated force-producing protein that plays a role in organelle transport. Its motor activity is directed toward the microtubule's plus end. The polypeptide is Kinesin-related protein 11 (kif11) (Dictyostelium discoideum (Social amoeba)).